The primary structure comprises 287 residues: ATP synthase gamma chain (287 aa).

It belongs to the ATPase gamma chain family. In terms of assembly, F-type ATPases have 2 components, CF(1) - the catalytic core - and CF(0) - the membrane proton channel. CF(1) has five subunits: alpha(3), beta(3), gamma(1), delta(1), epsilon(1). CF(0) has three main subunits: a, b and c.

It localises to the cell inner membrane. Produces ATP from ADP in the presence of a proton gradient across the membrane. The gamma chain is believed to be important in regulating ATPase activity and the flow of protons through the CF(0) complex. The sequence is that of ATP synthase gamma chain from Edwardsiella ictaluri (strain 93-146).